A 254-amino-acid chain; its full sequence is 4-hydroxy-tetrahydrodipicolinate reductase (254 aa).

Residue 7–12 (GASGRI) coordinates NAD(+). Arg35 contributes to the NADP(+) binding site. NAD(+)-binding positions include 91–93 (GTT) and 115–118 (AHNM). His147 acts as the Proton donor/acceptor in catalysis. (S)-2,3,4,5-tetrahydrodipicolinate is bound at residue His148. Lys151 functions as the Proton donor in the catalytic mechanism. 157–158 (GT) contacts (S)-2,3,4,5-tetrahydrodipicolinate.

The protein belongs to the DapB family.

The protein resides in the cytoplasm. It catalyses the reaction (S)-2,3,4,5-tetrahydrodipicolinate + NAD(+) + H2O = (2S,4S)-4-hydroxy-2,3,4,5-tetrahydrodipicolinate + NADH + H(+). The enzyme catalyses (S)-2,3,4,5-tetrahydrodipicolinate + NADP(+) + H2O = (2S,4S)-4-hydroxy-2,3,4,5-tetrahydrodipicolinate + NADPH + H(+). The protein operates within amino-acid biosynthesis; L-lysine biosynthesis via DAP pathway; (S)-tetrahydrodipicolinate from L-aspartate: step 4/4. Its function is as follows. Catalyzes the conversion of 4-hydroxy-tetrahydrodipicolinate (HTPA) to tetrahydrodipicolinate. The chain is 4-hydroxy-tetrahydrodipicolinate reductase from Helicobacter pylori (strain G27).